The chain runs to 409 residues: LIM/homeobox protein ttx-3 (409 aa).

LIM zinc-binding domains follow at residues 108–169 and 171–232; these read NQCC…RYQK and CRKC…VRST. Disordered stretches follow at residues 245–299 and 372–409; these read AVVA…RTSF and MNPPLSSSSSGHSTDGYQLNTPPLSSEIYSPNSNYTHL. Pro residues predominate over residues 247-267; it reads VAPPPPPPTTTTAPPPAAPEQ. The homeobox DNA-binding region spans 292–351; sequence SKRMRTSFKHHQLRAMKTYFALNHNPDAKDLKQLAAKTNLTKRVLQVWFQNARAKYRREL. The span at 382-409 shows a compositional bias: polar residues; it reads GHSTDGYQLNTPPLSSEIYSPNSNYTHL.

In terms of tissue distribution, expressed in the AIA, AIN and AIY interneurons, and in the NSM neurons. Expressed also in ADL and ASI sensory neurons in 60-70% of L2 larvae. Expression is also detected in head muscles of embryos and some early larvae but not late larvae or adults.

It localises to the nucleus. The protein localises to the perikaryon. The protein resides in the cell projection. Its subcellular location is the axon. Functionally, transcription factor. Binds to a sequence motif, 5'-TTATTGGCTTCGTTAA-3', which may be involved in AIY interneuron function, in the regulatory elements of target genes; binding is more efficient, in vitro, together with homeobox protein ceh-10. Required for specification of the AIA and AIY interneurons and the NSM neurons. Positively regulates the expression of a number of genes including ceh-10, ceh-23, kal-1, hen-1, ser-2, unc-17 and sra-11 in AIY neurons, and cat-4, flp-4, bas-1, ptps-1 and mgl-1 in NSM neurons. In concert with WNT/beta-catenin signaling, initiates expression of homeobox ceh-10 in AIY, but not in the sister cells, SMDD motor neurons. Also acts in an autoregulatory feedback loop to maintain its own expression. Plays a role in the thermotactic response, olfactory imprinting, regulation of longevity, control of dauer formation and axon outgrowth and pathfinding. Not required for normal chemosensory behavior. The protein is LIM/homeobox protein ttx-3 of Caenorhabditis elegans.